A 437-amino-acid chain; its full sequence is Trigger factor (437 aa).

The PPIase FKBP-type domain occupies 161–246 (GDRVNIDFKG…VNKVEGKALP (86 aa)).

Belongs to the FKBP-type PPIase family. Tig subfamily.

It is found in the cytoplasm. It catalyses the reaction [protein]-peptidylproline (omega=180) = [protein]-peptidylproline (omega=0). In terms of biological role, involved in protein export. Acts as a chaperone by maintaining the newly synthesized protein in an open conformation. Functions as a peptidyl-prolyl cis-trans isomerase. The polypeptide is Trigger factor (Alcanivorax borkumensis (strain ATCC 700651 / DSM 11573 / NCIMB 13689 / SK2)).